The primary structure comprises 542 residues: Chaperonin GroEL (542 aa).

Residues 29–32 (TMGP), 86–90 (DGTTT), glycine 413, 476–478 (NAA), and aspartate 492 contribute to the ATP site. The tract at residues 521–542 (KPDPNANNQAPAAPQGGMGGMM) is disordered. Residues 524–535 (PNANNQAPAAPQ) are compositionally biased toward low complexity.

This sequence belongs to the chaperonin (HSP60) family. As to quaternary structure, forms a cylinder of 14 subunits composed of two heptameric rings stacked back-to-back. Interacts with the co-chaperonin GroES.

The protein localises to the cytoplasm. It catalyses the reaction ATP + H2O + a folded polypeptide = ADP + phosphate + an unfolded polypeptide.. Its function is as follows. Together with its co-chaperonin GroES, plays an essential role in assisting protein folding. The GroEL-GroES system forms a nano-cage that allows encapsulation of the non-native substrate proteins and provides a physical environment optimized to promote and accelerate protein folding. The sequence is that of Chaperonin GroEL from Limosilactobacillus reuteri subsp. reuteri (strain JCM 1112) (Lactobacillus reuteri).